Reading from the N-terminus, the 118-residue chain is Small ribosomal subunit protein uS13 (118 aa).

Residues 94–118 (GLPLRGQRTKTNARTRKGRRKGTSS) are disordered.

This sequence belongs to the universal ribosomal protein uS13 family. Part of the 30S ribosomal subunit. Forms a loose heterodimer with protein S19. Forms two bridges to the 50S subunit in the 70S ribosome.

Located at the top of the head of the 30S subunit, it contacts several helices of the 16S rRNA. In the 70S ribosome it contacts the 23S rRNA (bridge B1a) and protein L5 of the 50S subunit (bridge B1b), connecting the 2 subunits; these bridges are implicated in subunit movement. Contacts the tRNAs in the A and P-sites. The protein is Small ribosomal subunit protein uS13 of Legionella pneumophila (strain Paris).